A 175-amino-acid polypeptide reads, in one-letter code: Large ribosomal subunit protein uL6 (175 aa).

It belongs to the universal ribosomal protein uL6 family. In terms of assembly, part of the 50S ribosomal subunit.

Functionally, this protein binds to the 23S rRNA, and is important in its secondary structure. It is located near the subunit interface in the base of the L7/L12 stalk, and near the tRNA binding site of the peptidyltransferase center. The polypeptide is Large ribosomal subunit protein uL6 (Xanthomonas axonopodis pv. citri (strain 306)).